A 161-amino-acid polypeptide reads, in one-letter code: Anaerobic nitrite reductase HB2 (161 aa).

The region spanning 5–154 is the Globin domain; sequence VFTEKQEALV…LALAIKAEMK (150 aa). The Homodimerization signature appears at 38–42; that stretch reads EIAPA. Heme b-binding residues include S48, K62, H66, and H101. A Homodimerization motif is present at residues 108-120; the sequence is DPHFEVVKEALVR.

The protein belongs to the plant globin family. In terms of assembly, homodimer. Requires heme b as cofactor.

It localises to the cytoplasm. The protein localises to the nucleus. It catalyses the reaction Fe(III)-heme b-[protein] + nitric oxide + H2O = Fe(II)-heme b-[protein] + nitrite + 2 H(+). In terms of biological role, phytoglobin that reduces nitrite to nitric oxide (NO) under anoxic conditions (e.g. during flooding or in waterlogged soil). May not function as an oxygen storage or transport protein. Has an unusually high affinity for O(2) through an hexacoordinate heme iron because of a very low dissociation constant. This is Anaerobic nitrite reductase HB2 from Brassica napus (Rape).